Consider the following 338-residue polypeptide: 6-phosphogluconolactonase (338 aa).

This sequence belongs to the cycloisomerase 2 family.

It carries out the reaction 6-phospho-D-glucono-1,5-lactone + H2O = 6-phospho-D-gluconate + H(+). The protein operates within carbohydrate degradation; pentose phosphate pathway; D-ribulose 5-phosphate from D-glucose 6-phosphate (oxidative stage): step 2/3. Functionally, catalyzes the hydrolysis of 6-phosphogluconolactone to 6-phosphogluconate. The sequence is that of 6-phosphogluconolactonase from Blochmanniella floridana.